The chain runs to 487 residues: N-succinylglutamate 5-semialdehyde dehydrogenase (487 aa).

221–226 (GSSRTG) is an NAD(+) binding site. Catalysis depends on residues E244 and C278.

The protein belongs to the aldehyde dehydrogenase family. AstD subfamily.

The enzyme catalyses N-succinyl-L-glutamate 5-semialdehyde + NAD(+) + H2O = N-succinyl-L-glutamate + NADH + 2 H(+). It functions in the pathway amino-acid degradation; L-arginine degradation via AST pathway; L-glutamate and succinate from L-arginine: step 4/5. In terms of biological role, catalyzes the NAD-dependent reduction of succinylglutamate semialdehyde into succinylglutamate. In Pseudomonas putida (strain W619), this protein is N-succinylglutamate 5-semialdehyde dehydrogenase.